A 488-amino-acid chain; its full sequence is Probable glycine dehydrogenase (decarboxylating) subunit 2 (488 aa).

Residue K264 is modified to N6-(pyridoxal phosphate)lysine.

This sequence belongs to the GcvP family. C-terminal subunit subfamily. As to quaternary structure, the glycine cleavage system is composed of four proteins: P, T, L and H. In this organism, the P 'protein' is a heterodimer of two subunits. Pyridoxal 5'-phosphate is required as a cofactor.

The enzyme catalyses N(6)-[(R)-lipoyl]-L-lysyl-[glycine-cleavage complex H protein] + glycine + H(+) = N(6)-[(R)-S(8)-aminomethyldihydrolipoyl]-L-lysyl-[glycine-cleavage complex H protein] + CO2. In terms of biological role, the glycine cleavage system catalyzes the degradation of glycine. The P protein binds the alpha-amino group of glycine through its pyridoxal phosphate cofactor; CO(2) is released and the remaining methylamine moiety is then transferred to the lipoamide cofactor of the H protein. In Methylococcus capsulatus (strain ATCC 33009 / NCIMB 11132 / Bath), this protein is Probable glycine dehydrogenase (decarboxylating) subunit 2.